An 868-amino-acid polypeptide reads, in one-letter code: Ionotropic receptor 93a (868 aa).

Positions methionine 1 to alanine 28 are cleaved as a signal peptide. Topologically, residues asparagine 29–arginine 565 are extracellular. N-linked (GlcNAc...) asparagine glycans are attached at residues asparagine 38, asparagine 205, asparagine 294, asparagine 305, asparagine 432, asparagine 475, asparagine 499, and asparagine 543. The helical transmembrane segment at isoleucine 566–leucine 586 threads the bilayer. The Cytoplasmic portion of the chain corresponds to leucine 587–glycine 642. The helical transmembrane segment at phenylalanine 643–leucine 663 threads the bilayer. At threonine 664–glycine 832 the chain is on the extracellular side. Residue asparagine 691 is glycosylated (N-linked (GlcNAc...) asparagine). A helical membrane pass occupies residues cysteine 833–tryptophan 853. At tyrosine 854–asparagine 868 the chain is on the cytoplasmic side.

Belongs to the glutamate-gated ion channel (TC 1.A.10.1) family. In terms of tissue distribution, in the antenna, detected in sacculus neurons which innervate the first and second chambers (at protein level). Expressed in multiple cells of the larval dorsal organ ganglion, including the dorsal organ cool cells where it is predominately localized to the dendritic bulbs (at protein level).

It localises to the cell membrane. In terms of biological role, integral part of various neural sensory systems in the antenna that provide the neural basis for the response to environmental changes in temperature (thermosensation) and humidity (hygrosensation). Together with Ir21a and Ir25a, mediates the response of the larval dorsal organ cool cells, a trio of cool-responsive neurons, to cooling and is required for cool avoidance behavior. Together with Ir25a and Ir40a, mediates the response of the hydrosensory sacculus neurons to changes in relative humidity, and is required for dry detection and humidiy preference behavior. In Drosophila melanogaster (Fruit fly), this protein is Ionotropic receptor 93a.